A 178-amino-acid polypeptide reads, in one-letter code: uncharacterized protein (178 aa).

The signal sequence occupies residues 1 to 23; sequence MNYSVIWAITILILGLVLTLAWA.

This is an uncharacterized protein from Invertebrate iridescent virus 3 (IIV-3).